Reading from the N-terminus, the 1462-residue chain is Gag-Pol polyprotein (1462 aa).

Gly2 carries the N-myristoyl glycine; by host lipid modification. The interval 7–31 (VLRGKKADELEKVRLRPGGKKKYKL) is interaction with Gp41. The short motif at 16–22 (LEKVRLR) is the Nuclear export signal element. A Nuclear localization signal motif is present at residues 26 to 32 (KKKYKLK). The interval 111–136 (ETGTAEKMPDTSRPTAPPSGKGGNYP) is disordered. Phosphotyrosine; by host is present on Tyr135. An interaction with human PPIA/CYPA and NUP153 region spans residues 191-228 (NCVGDHQAAMQIIREIINEEAADWDANHPIPGPLPAGQ). Residues 279–365 (YNPTNILDIK…GGPGQKARLM (87 aa)) form a dimerization/Multimerization of capsid protein p24 region. 2 CCHC-type zinc fingers span residues 389–406 (IKCW…QCRA) and 410–427 (QGCW…NCPD). The interval 439–510 (GKEAPQFPRG…GPMQGDNRGL (72 aa)) is disordered. Residues 456–469 (TNSTPIGSSSGSTG) are compositionally biased toward low complexity. Over residues 473-491 (AAREKAEGAETETIQRGDR) the composition is skewed to basic and acidic residues. Residues 513-517 (PQFSL) are dimerization of protease. A Peptidase A2 domain is found at 532-601 (VEVLLDTGAD…TPINIFGRNI (70 aa)). Asp537 (for protease activity; shared with dimeric partner) is an active-site residue. 2 dimerization of protease regions span residues 561–567 (GIGGFIN) and 600–612 (NILT…LNLP). Residues 655–845 (EGQLEEAPPT…PPYRWMGYEL (191 aa)) form the Reverse transcriptase domain. Mg(2+)-binding residues include Asp721, Asp796, and Asp797. Residues 838 to 846 (YRWMGYELW) form an RT 'primer grip' region. Positions 1007-1023 (WEQWWDNYWQVTWIPDW) match the Tryptophan repeat motif motif. Residues 1043-1166 (IPGTETFYTD…VDHLVSQGIR (124 aa)) form the RNase H type-1 domain. Mg(2+)-binding residues include Asp1052, Glu1087, Asp1107, and Asp1158. The segment at 1172 to 1213 (EKIEPAQEEHEKYHTNVKELCHKFDIPQLVARQIVNTCAQYQ) adopts an Integrase-type; degenerate zinc-finger fold. In terms of domain architecture, Integrase catalytic spans 1222–1373 (QVNAEVGTWQ…TPSERLINMI (152 aa)). Mg(2+) is bound by residues Asp1233, Asp1285, and Glu1321. Positions 1392–1439 (FRVYFREGRDQLWKGPGELLWKGDGAVIVKVGTDIKIIPRRKAKIIRD) form a DNA-binding region, integrase-type.

Homotrimer; further assembles as hexamers of trimers. Interacts with gp41 (via C-terminus). Interacts with host CALM1; this interaction induces a conformational change in the Matrix protein, triggering exposure of the myristate group. Interacts with host AP3D1; this interaction allows the polyprotein trafficking to multivesicular bodies during virus assembly. Part of the pre-integration complex (PIC) which is composed of viral genome, matrix protein, Vpr and integrase. In terms of assembly, homodimer; the homodimer further multimerizes as homohexamers or homopentamers. Interacts with human PPIA/CYPA. Interacts with human NUP153. Interacts with host PDZD8; this interaction stabilizes the capsid. Interacts with monkey TRIM5; this interaction destabilizes the capsid. As to quaternary structure, homodimer, whose active site consists of two apposed aspartic acid residues. Heterodimer of p66 RT and p51 RT (RT p66/p51). Heterodimerization of RT is essential for DNA polymerase activity. The overall folding of the subdomains is similar in p66 RT and p51 RT but the spatial arrangements of the subdomains are dramatically different. In terms of assembly, homotetramer; may further associate as a homohexadecamer. Part of the pre-integration complex (PIC) which is composed of viral genome, matrix protein, Vpr and integrase. Interacts with human SMARCB1/INI1 and human PSIP1/LEDGF isoform 1. Interacts with human KPNA3; this interaction might play a role in nuclear import of the pre-integration complex. Interacts with human NUP153; this interaction might play a role in nuclear import of the pre-integration complex. Requires Mg(2+) as cofactor. Specific enzymatic cleavages by the viral protease yield mature proteins. The protease is released by autocatalytic cleavage. The polyprotein is cleaved during and after budding, this process is termed maturation. Proteolytic cleavage of p66 RT removes the RNase H domain to yield the p51 RT subunit. Nucleocapsid protein p7 might be further cleaved after virus entry.

The protein localises to the host cell membrane. It is found in the host endosome. The protein resides in the host multivesicular body. It localises to the virion membrane. Its subcellular location is the host nucleus. The protein localises to the host cytoplasm. It is found in the virion. It catalyses the reaction Endopeptidase for which the P1 residue is preferably hydrophobic.. The enzyme catalyses Endohydrolysis of RNA in RNA/DNA hybrids. Three different cleavage modes: 1. sequence-specific internal cleavage of RNA. Human immunodeficiency virus type 1 and Moloney murine leukemia virus enzymes prefer to cleave the RNA strand one nucleotide away from the RNA-DNA junction. 2. RNA 5'-end directed cleavage 13-19 nucleotides from the RNA end. 3. DNA 3'-end directed cleavage 15-20 nucleotides away from the primer terminus.. The catalysed reaction is 3'-end directed exonucleolytic cleavage of viral RNA-DNA hybrid.. It carries out the reaction DNA(n) + a 2'-deoxyribonucleoside 5'-triphosphate = DNA(n+1) + diphosphate. Protease: The viral protease is inhibited by many synthetic protease inhibitors (PIs), such as amprenavir, atazanavir, indinavir, loprinavir, nelfinavir, ritonavir and saquinavir. Use of protease inhibitors in tritherapy regimens permit more ambitious therapeutic strategies. Reverse transcriptase/ribonuclease H: RT can be inhibited either by nucleoside RT inhibitors (NRTIs) or by non nucleoside RT inhibitors (NNRTIs). NRTIs act as chain terminators, whereas NNRTIs inhibit DNA polymerization by binding a small hydrophobic pocket near the RT active site and inducing an allosteric change in this region. Classical NRTIs are abacavir, adefovir (PMEA), didanosine (ddI), lamivudine (3TC), stavudine (d4T), tenofovir (PMPA), zalcitabine (ddC), and zidovudine (AZT). Classical NNRTIs are atevirdine (BHAP U-87201E), delavirdine, efavirenz (DMP-266), emivirine (I-EBU), and nevirapine (BI-RG-587). The tritherapies used as a basic effective treatment of AIDS associate two NRTIs and one NNRTI. Functionally, mediates, with Gag polyprotein, the essential events in virion assembly, including binding the plasma membrane, making the protein-protein interactions necessary to create spherical particles, recruiting the viral Env proteins, and packaging the genomic RNA via direct interactions with the RNA packaging sequence (Psi). Gag-Pol polyprotein may regulate its own translation, by the binding genomic RNA in the 5'-UTR. At low concentration, the polyprotein would promote translation, whereas at high concentration, the polyprotein would encapsidate genomic RNA and then shut off translation. Its function is as follows. Targets the polyprotein to the plasma membrane via a multipartite membrane-binding signal, that includes its myristoylated N-terminus. Matrix protein is part of the pre-integration complex. Implicated in the release from host cell mediated by Vpu. Binds to RNA. In terms of biological role, forms the conical core that encapsulates the genomic RNA-nucleocapsid complex in the virion. Most core are conical, with only 7% tubular. The core is constituted by capsid protein hexamer subunits. The core is disassembled soon after virion entry. Host restriction factors such as TRIM5-alpha or TRIMCyp bind retroviral capsids and cause premature capsid disassembly, leading to blocks in reverse transcription. Capsid restriction by TRIM5 is one of the factors which restricts HIV-1 to the human species. Host PIN1 apparently facilitates the virion uncoating. On the other hand, interactions with PDZD8 or CYPA stabilize the capsid. Encapsulates and protects viral dimeric unspliced genomic RNA (gRNA). Binds these RNAs through its zinc fingers. Acts as a nucleic acid chaperone which is involved in rearangement of nucleic acid secondary structure during gRNA retrotranscription. Also facilitates template switch leading to recombination. As part of the polyprotein, participates in gRNA dimerization, packaging, tRNA incorporation and virion assembly. Functionally, aspartyl protease that mediates proteolytic cleavages of Gag and Gag-Pol polyproteins during or shortly after the release of the virion from the plasma membrane. Cleavages take place as an ordered, step-wise cascade to yield mature proteins. This process is called maturation. Displays maximal activity during the budding process just prior to particle release from the cell. Also cleaves Nef and Vif, probably concomitantly with viral structural proteins on maturation of virus particles. Hydrolyzes host EIF4GI and PABP1 in order to shut off the capped cellular mRNA translation. The resulting inhibition of cellular protein synthesis serves to ensure maximal viral gene expression and to evade host immune response. Its function is as follows. Multifunctional enzyme that converts the viral RNA genome into dsDNA in the cytoplasm, shortly after virus entry into the cell. This enzyme displays a DNA polymerase activity that can copy either DNA or RNA templates, and a ribonuclease H (RNase H) activity that cleaves the RNA strand of RNA-DNA heteroduplexes in a partially processive 3' to 5' endonucleasic mode. Conversion of viral genomic RNA into dsDNA requires many steps. A tRNA(3)-Lys binds to the primer-binding site (PBS) situated at the 5'-end of the viral RNA. RT uses the 3' end of the tRNA primer to perform a short round of RNA-dependent minus-strand DNA synthesis. The reading proceeds through the U5 region and ends after the repeated (R) region which is present at both ends of viral RNA. The portion of the RNA-DNA heteroduplex is digested by the RNase H, resulting in a ssDNA product attached to the tRNA primer. This ssDNA/tRNA hybridizes with the identical R region situated at the 3' end of viral RNA. This template exchange, known as minus-strand DNA strong stop transfer, can be either intra- or intermolecular. RT uses the 3' end of this newly synthesized short ssDNA to perform the RNA-dependent minus-strand DNA synthesis of the whole template. RNase H digests the RNA template except for two polypurine tracts (PPTs) situated at the 5'-end and near the center of the genome. It is not clear if both polymerase and RNase H activities are simultaneous. RNase H probably can proceed both in a polymerase-dependent (RNA cut into small fragments by the same RT performing DNA synthesis) and a polymerase-independent mode (cleavage of remaining RNA fragments by free RTs). Secondly, RT performs DNA-directed plus-strand DNA synthesis using the PPTs that have not been removed by RNase H as primers. PPTs and tRNA primers are then removed by RNase H. The 3' and 5' ssDNA PBS regions hybridize to form a circular dsDNA intermediate. Strand displacement synthesis by RT to the PBS and PPT ends produces a blunt ended, linear dsDNA copy of the viral genome that includes long terminal repeats (LTRs) at both ends. In terms of biological role, catalyzes viral DNA integration into the host chromosome, by performing a series of DNA cutting and joining reactions. This enzyme activity takes place after virion entry into a cell and reverse transcription of the RNA genome in dsDNA. The first step in the integration process is 3' processing. This step requires a complex comprising the viral genome, matrix protein, Vpr and integrase. This complex is called the pre-integration complex (PIC). The integrase protein removes 2 nucleotides from each 3' end of the viral DNA, leaving recessed CA OH's at the 3' ends. In the second step, the PIC enters cell nucleus. This process is mediated through integrase and Vpr proteins, and allows the virus to infect a non dividing cell. This ability to enter the nucleus is specific of lentiviruses, other retroviruses cannot and rely on cell division to access cell chromosomes. In the third step, termed strand transfer, the integrase protein joins the previously processed 3' ends to the 5' ends of strands of target cellular DNA at the site of integration. The 5'-ends are produced by integrase-catalyzed staggered cuts, 5 bp apart. A Y-shaped, gapped, recombination intermediate results, with the 5'-ends of the viral DNA strands and the 3' ends of target DNA strands remaining unjoined, flanking a gap of 5 bp. The last step is viral DNA integration into host chromosome. This involves host DNA repair synthesis in which the 5 bp gaps between the unjoined strands are filled in and then ligated. Since this process occurs at both cuts flanking the HIV genome, a 5 bp duplication of host DNA is produced at the ends of HIV-1 integration. Alternatively, Integrase may catalyze the excision of viral DNA just after strand transfer, this is termed disintegration. This chain is Gag-Pol polyprotein (gag-pol), found in Homo sapiens (Human).